We begin with the raw amino-acid sequence, 375 residues long: Putative monooxygenase Rv1533 (375 aa).

FMN-binding positions include Gln-190, Gly-195, Gly-224, and 243–246; that span reads WCGS.

Belongs to the nitronate monooxygenase family. It depends on FMN as a cofactor.

In Mycobacterium tuberculosis (strain ATCC 25618 / H37Rv), this protein is Putative monooxygenase Rv1533.